The primary structure comprises 341 residues: Glycerol-3-phosphate dehydrogenase [NAD(P)+] 1 (341 aa).

NADPH contacts are provided by Ser-17, Trp-18, Arg-37, and Lys-112. Lys-112 and Gly-140 together coordinate sn-glycerol 3-phosphate. An NADPH-binding site is contributed by Ala-144. Sn-glycerol 3-phosphate-binding residues include Lys-195, Asp-248, Ser-258, Arg-259, and Asn-260. The active-site Proton acceptor is Lys-195. Residue Arg-259 coordinates NADPH. 2 residues coordinate NADPH: Val-283 and Glu-285.

The protein belongs to the NAD-dependent glycerol-3-phosphate dehydrogenase family.

Its subcellular location is the cytoplasm. The catalysed reaction is sn-glycerol 3-phosphate + NAD(+) = dihydroxyacetone phosphate + NADH + H(+). It catalyses the reaction sn-glycerol 3-phosphate + NADP(+) = dihydroxyacetone phosphate + NADPH + H(+). Its pathway is membrane lipid metabolism; glycerophospholipid metabolism. Functionally, catalyzes the reduction of the glycolytic intermediate dihydroxyacetone phosphate (DHAP) to sn-glycerol 3-phosphate (G3P), the key precursor for phospholipid synthesis. The polypeptide is Glycerol-3-phosphate dehydrogenase [NAD(P)+] 1 (Mycobacterium bovis (strain ATCC BAA-935 / AF2122/97)).